We begin with the raw amino-acid sequence, 458 residues long: Bifunctional protein GlmU (458 aa).

The tract at residues 1–230 (MLQIDVVILA…DWEVVGVNDK (230 aa)) is pyrophosphorylase. UDP-N-acetyl-alpha-D-glucosamine-binding positions include 9-12 (LAAG), lysine 23, glutamine 75, and 80-81 (GT). A Mg(2+)-binding site is contributed by aspartate 104. 4 residues coordinate UDP-N-acetyl-alpha-D-glucosamine: glycine 139, glutamate 155, asparagine 170, and asparagine 228. Residue asparagine 228 participates in Mg(2+) binding. A linker region spans residues 231 to 251 (IQLSTLERAHQQDVAKGLMEQ). An N-acetyltransferase region spans residues 252–458 (GVMFADPARF…NWKRPKKNKD (207 aa)). The UDP-N-acetyl-alpha-D-glucosamine site is built by arginine 334 and lysine 352. Histidine 364 (proton acceptor) is an active-site residue. The UDP-N-acetyl-alpha-D-glucosamine site is built by tyrosine 367 and asparagine 378. Residues alanine 381, 387–388 (NY), serine 406, alanine 424, and arginine 441 each bind acetyl-CoA.

This sequence in the N-terminal section; belongs to the N-acetylglucosamine-1-phosphate uridyltransferase family. In the C-terminal section; belongs to the transferase hexapeptide repeat family. In terms of assembly, homotrimer. The cofactor is Mg(2+).

It localises to the cytoplasm. The catalysed reaction is alpha-D-glucosamine 1-phosphate + acetyl-CoA = N-acetyl-alpha-D-glucosamine 1-phosphate + CoA + H(+). It carries out the reaction N-acetyl-alpha-D-glucosamine 1-phosphate + UTP + H(+) = UDP-N-acetyl-alpha-D-glucosamine + diphosphate. It functions in the pathway nucleotide-sugar biosynthesis; UDP-N-acetyl-alpha-D-glucosamine biosynthesis; N-acetyl-alpha-D-glucosamine 1-phosphate from alpha-D-glucosamine 6-phosphate (route II): step 2/2. Its pathway is nucleotide-sugar biosynthesis; UDP-N-acetyl-alpha-D-glucosamine biosynthesis; UDP-N-acetyl-alpha-D-glucosamine from N-acetyl-alpha-D-glucosamine 1-phosphate: step 1/1. The protein operates within bacterial outer membrane biogenesis; LPS lipid A biosynthesis. Its function is as follows. Catalyzes the last two sequential reactions in the de novo biosynthetic pathway for UDP-N-acetylglucosamine (UDP-GlcNAc). The C-terminal domain catalyzes the transfer of acetyl group from acetyl coenzyme A to glucosamine-1-phosphate (GlcN-1-P) to produce N-acetylglucosamine-1-phosphate (GlcNAc-1-P), which is converted into UDP-GlcNAc by the transfer of uridine 5-monophosphate (from uridine 5-triphosphate), a reaction catalyzed by the N-terminal domain. This Nitrosomonas eutropha (strain DSM 101675 / C91 / Nm57) protein is Bifunctional protein GlmU.